The chain runs to 234 residues: Large ribosomal subunit protein uL1 (234 aa).

The protein belongs to the universal ribosomal protein uL1 family. Part of the 50S ribosomal subunit.

Its function is as follows. Binds directly to 23S rRNA. The L1 stalk is quite mobile in the ribosome, and is involved in E site tRNA release. In terms of biological role, protein L1 is also a translational repressor protein, it controls the translation of the L11 operon by binding to its mRNA. This chain is Large ribosomal subunit protein uL1, found in Escherichia coli (strain 55989 / EAEC).